The sequence spans 480 residues: Islet cell autoantigen 1 (480 aa).

One can recognise an AH domain in the interval 50 to 253; that stretch reads ASDADLDAKL…TSHTMAAIHE (204 aa). Basic and acidic residues-rich tracts occupy residues 276–293 and 306–321; these read LVEK…REAV and ENQH…EEGK. 2 disordered regions span residues 276–338 and 400–421; these read LVEK…ACSG and LKEP…IGSA.

It is found in the cytoplasm. The protein localises to the cytosol. It localises to the golgi apparatus membrane. Its subcellular location is the cytoplasmic vesicle. The protein resides in the secretory vesicle membrane. It is found in the secretory vesicle. The protein localises to the synaptic vesicle membrane. Functionally, may play a role in neurotransmitter secretion. The chain is Islet cell autoantigen 1 from Rattus norvegicus (Rat).